Here is a 256-residue protein sequence, read N- to C-terminus: F-actin-capping protein subunit beta (256 aa).

Met1 is modified (N-acetylmethionine).

This sequence belongs to the F-actin-capping protein beta subunit family. As to quaternary structure, component of the F-actin capping complex, composed of a heterodimer of an alpha and a beta subunit.

The protein resides in the cytoplasm. Its subcellular location is the cytoskeleton. Its function is as follows. F-actin-capping proteins bind in a Ca(2+)-independent manner to the fast growing ends of actin filaments (barbed end) thereby blocking the exchange of subunits at these ends. Unlike other capping proteins (such as gelsolin and severin), these proteins do not sever actin filaments. In Arabidopsis thaliana (Mouse-ear cress), this protein is F-actin-capping protein subunit beta.